The sequence spans 85 residues: UPF0297 protein CLL_A1175 (85 aa).

The protein belongs to the UPF0297 family.

The protein is UPF0297 protein CLL_A1175 of Clostridium botulinum (strain Eklund 17B / Type B).